Here is a 778-residue protein sequence, read N- to C-terminus: Hyperosmolality-gated Ca2+ permeable channel 1.4 (778 aa).

The next 10 helical transmembrane spans lie at 7 to 27 (IGLA…LFAI), 101 to 121 (IYLI…SILV), 158 to 178 (FWAH…VLMK), 375 to 395 (FVMH…IAFV), 427 to 447 (FLPG…LMIM), 467 to 487 (YYIF…SAFE), 512 to 532 (ATFF…GEIF), 584 to 604 (PVTP…YLVF), 626 to 646 (VHGR…GLMS), and 651 to 671 (VQST…HRFC). Residues 738-778 (VVQTKRQRSRRTTVASSNASRGSSQSTPFNQLDLGKGKPET) form a disordered region. A compositionally biased stretch (low complexity) spans 753-763 (SSNASRGSSQS).

The protein belongs to the CSC1 (TC 1.A.17) family.

It localises to the membrane. In terms of biological role, acts as an osmosensitive calcium-permeable cation channel. The chain is Hyperosmolality-gated Ca2+ permeable channel 1.4 from Arabidopsis thaliana (Mouse-ear cress).